Consider the following 750-residue polypeptide: Photosystem I P700 chlorophyll a apoprotein A1 (750 aa).

8 helical membrane passes run 70 to 93 (IFSA…FHGA), 156 to 179 (LYCT…FHYH), 195 to 219 (LNHH…HVSL), 291 to 309 (TAHH…GHMY), 346 to 369 (WHAQ…HHMY), 385 to 411 (LSLF…IFMV), 433 to 455 (AIIS…LYIH), and 531 to 549 (FLVH…LILL). Positions 573 and 582 each coordinate [4Fe-4S] cluster. 2 consecutive transmembrane segments (helical) span residues 589-610 (HVFL…HFSW) and 664-686 (LSAY…MFLF). A chlorophyll a'-binding site is contributed by histidine 675. Methionine 683 and tyrosine 691 together coordinate chlorophyll a. Tryptophan 692 is a binding site for phylloquinone. The chain crosses the membrane as a helical span at residues 724–744 (AVGVTHYLLGGIATTWAFFLA).

Belongs to the PsaA/PsaB family. The PsaA/B heterodimer binds the P700 chlorophyll special pair and subsequent electron acceptors. PSI consists of a core antenna complex that captures photons, and an electron transfer chain that converts photonic excitation into a charge separation. The eukaryotic PSI reaction center is composed of at least 11 subunits. P700 is a chlorophyll a/chlorophyll a' dimer, A0 is one or more chlorophyll a, A1 is one or both phylloquinones and FX is a shared 4Fe-4S iron-sulfur center. serves as cofactor.

It localises to the plastid. It is found in the chloroplast thylakoid membrane. It carries out the reaction reduced [plastocyanin] + hnu + oxidized [2Fe-2S]-[ferredoxin] = oxidized [plastocyanin] + reduced [2Fe-2S]-[ferredoxin]. PsaA and PsaB bind P700, the primary electron donor of photosystem I (PSI), as well as the electron acceptors A0, A1 and FX. PSI is a plastocyanin-ferredoxin oxidoreductase, converting photonic excitation into a charge separation, which transfers an electron from the donor P700 chlorophyll pair to the spectroscopically characterized acceptors A0, A1, FX, FA and FB in turn. Oxidized P700 is reduced on the lumenal side of the thylakoid membrane by plastocyanin. This Spinacia oleracea (Spinach) protein is Photosystem I P700 chlorophyll a apoprotein A1.